Here is a 302-residue protein sequence, read N- to C-terminus: Homoserine O-acetyltransferase (302 aa).

Catalysis depends on Cys-142, which acts as the Acyl-thioester intermediate. Substrate is bound by residues Lys-163 and Ser-192. His-235 (proton acceptor) is an active-site residue. The active site involves Glu-237. Arg-249 serves as a coordination point for substrate.

The protein belongs to the MetA family.

The protein resides in the cytoplasm. It carries out the reaction L-homoserine + acetyl-CoA = O-acetyl-L-homoserine + CoA. The protein operates within amino-acid biosynthesis; L-methionine biosynthesis via de novo pathway; O-acetyl-L-homoserine from L-homoserine: step 1/1. Its function is as follows. Transfers an acetyl group from acetyl-CoA to L-homoserine, forming acetyl-L-homoserine. This chain is Homoserine O-acetyltransferase, found in Geobacillus sp. (strain WCH70).